A 344-amino-acid polypeptide reads, in one-letter code: tRNA N6-adenosine threonylcarbamoyltransferase (344 aa).

Positions 111 and 115 each coordinate Fe cation. Residues 134–138 (LVSGG), Asp-167, Gly-180, and Asn-272 each bind substrate. Asp-300 provides a ligand contact to Fe cation.

Belongs to the KAE1 / TsaD family. Fe(2+) serves as cofactor.

The protein localises to the cytoplasm. It catalyses the reaction L-threonylcarbamoyladenylate + adenosine(37) in tRNA = N(6)-L-threonylcarbamoyladenosine(37) in tRNA + AMP + H(+). Required for the formation of a threonylcarbamoyl group on adenosine at position 37 (t(6)A37) in tRNAs that read codons beginning with adenine. Is involved in the transfer of the threonylcarbamoyl moiety of threonylcarbamoyl-AMP (TC-AMP) to the N6 group of A37, together with TsaE and TsaB. TsaD likely plays a direct catalytic role in this reaction. This is tRNA N6-adenosine threonylcarbamoyltransferase from Idiomarina loihiensis (strain ATCC BAA-735 / DSM 15497 / L2-TR).